Reading from the N-terminus, the 107-residue chain is UPF0060 membrane protein M446_5886 (107 aa).

4 helical membrane-spanning segments follow: residues 4–24 (LLAY…IWAW), 31–51 (PLWL…LTRV), 59–79 (AYAA…WAAE), and 85–105 (RWDL…LLGP).

It belongs to the UPF0060 family.

The protein resides in the cell inner membrane. This chain is UPF0060 membrane protein M446_5886, found in Methylobacterium sp. (strain 4-46).